A 145-amino-acid polypeptide reads, in one-letter code: Major pollen allergen Ole e 1 (145 aa).

Intrachain disulfides connect Cys19-Cys90, Cys22-Cys131, and Cys43-Cys78. The N-linked (GlcNAc...) (complex) asparagine; alternate glycan is linked to Asn111. Asn111 is a glycosylation site (N-linked (GlcNAc...) (high mannose) asparagine; alternate).

It belongs to the Ole e I family. Post-translationally, N-glycosylated; contains high mannose (Man(7)-GlcNAc) and partially fucosylated complex glycans (GlcNAc-Man(3)-Xyl-GlcNAc). Complex glycans may contribute to the antigenicity. Exists both in a glycosylated and in a non-glycosylated form. Ole e 1 and Ole e 1.0103 are the only non-glycosylated isoallergens. A second potential glycosylation site exists at position 50 in cv. Bella de Espana and cv. Hojiblanca. Expressed in tapetum and pollen grains. Not detected in petals, roots or leaves.

The protein localises to the endoplasmic reticulum. It localises to the secreted. In terms of biological role, may be involved in recognition between pollen-stigma and pollen tube-style cells. In Olea europaea (Common olive), this protein is Major pollen allergen Ole e 1.